Consider the following 396-residue polypeptide: MAFKTLDDLSVAGKTVLVRGDLNVPVQDGRVSDTTRLDRLAPTLKELAGKGAKVVVLSHFGRPKGGPDAKNSLRQVVPALEAALGLPVAFAEDCVGESARAAIAAIEPGQVVLLENTRFHAGEEKNDPELARQMAALGDIYVNDAFSAAHRAHASTEGIAHLLPSAAGRLMQAELEALGKALARPERPVMAVVGGAKISTKLDLLLNMVTKVDMLVLGGGMANTFLFAQGRPVGKSLAEKDMADQARAIMEKAAASGCEILLPQDGAMAKEFKAGAPHRVVPVEQIADDEMMLDVGPATVEFVGLKLQGAKTVVWNGPMGAFEIRPFDSGTNAVAGLVAALTGDGRVLSVAGGGDTVAALEQAGVAGRFSYVSTAGGAFLEWLEGKELPGVKALGA.

Residues 21–23, Arg-36, 59–62, Arg-118, and Arg-151 contribute to the substrate site; these read DLN and HFGR. Residues Lys-201, Glu-323, and 353-356 each bind ATP; that span reads GGDT.

Belongs to the phosphoglycerate kinase family. In terms of assembly, monomer.

It localises to the cytoplasm. It carries out the reaction (2R)-3-phosphoglycerate + ATP = (2R)-3-phospho-glyceroyl phosphate + ADP. The protein operates within carbohydrate degradation; glycolysis; pyruvate from D-glyceraldehyde 3-phosphate: step 2/5. This chain is Phosphoglycerate kinase, found in Rhodospirillum centenum (strain ATCC 51521 / SW).